The chain runs to 382 residues: Cell division protein FtsZ (382 aa).

GTP is bound by residues 21–25 (GGGSN), 108–110 (GTG), glutamate 139, arginine 143, and aspartate 187. Residues 322–382 (RAQQQSNFNR…FLRNRRRKSR (61 aa)) are disordered. Positions 340 to 352 (KSKEKEAEKKEPR) are enriched in basic and acidic residues.

This sequence belongs to the FtsZ family. Homodimer. Polymerizes to form a dynamic ring structure in a strictly GTP-dependent manner. Interacts directly with several other division proteins.

The protein localises to the cytoplasm. Essential cell division protein that forms a contractile ring structure (Z ring) at the future cell division site. The regulation of the ring assembly controls the timing and the location of cell division. One of the functions of the FtsZ ring is to recruit other cell division proteins to the septum to produce a new cell wall between the dividing cells. Binds GTP and shows GTPase activity. In Halalkalibacterium halodurans (strain ATCC BAA-125 / DSM 18197 / FERM 7344 / JCM 9153 / C-125) (Bacillus halodurans), this protein is Cell division protein FtsZ.